Consider the following 162-residue polypeptide: Allophycocyanin beta chain (162 aa).

N4-methylasparagine is present on N72. C82 lines the (2R,3E)-phycocyanobilin pocket.

Belongs to the phycobiliprotein family. Heterodimer of an alpha and a beta chain. In terms of processing, contains one covalently linked phycocyanobilin chromophore.

Its subcellular location is the cellular thylakoid membrane. Its function is as follows. Light-harvesting photosynthetic bile pigment-protein from the phycobiliprotein complex. Allophycocyanin has a maximum absorption at approximately 650 nanometers. This Microchaete diplosiphon (Fremyella diplosiphon) protein is Allophycocyanin beta chain.